The primary structure comprises 519 residues: Ribonuclease Y 1 (519 aa).

The chain crosses the membrane as a helical span at residues 2–22; sequence IILYIILAIIAIVVGYCAGFF. Residues 84 to 113 form a disordered region; the sequence is QKQEDRLLQREDSLDRKDNSFEKRENSLER. Positions 209–294 constitute a KH domain; the sequence is TITVVSLPND…EMVEKAKKEM (86 aa). The HD domain occupies 335-428; that stretch reads VLNHSIEVAN…VAAANSISAA (94 aa).

Belongs to the RNase Y family.

The protein resides in the cell membrane. Functionally, endoribonuclease that initiates mRNA decay. This Pediococcus pentosaceus (strain ATCC 25745 / CCUG 21536 / LMG 10740 / 183-1w) protein is Ribonuclease Y 1.